A 388-amino-acid polypeptide reads, in one-letter code: Dipeptidase verJ (388 aa).

Zn(2+)-binding residues include His29, Asp31, and Glu142. Residues His169, Arg243, and Asp300 each coordinate substrate.

Belongs to the metallo-dependent hydrolases superfamily. Peptidase M19 family. It depends on Zn(2+) as a cofactor.

The enzyme catalyses an L-aminoacyl-L-amino acid + H2O = 2 an L-alpha-amino acid. Its pathway is mycotoxin biosynthesis. In terms of biological role, dipeptidase; part of the gene cluster that mediates the biosynthesis of 11'-deoxyverticillin A, one of the dimeric epipolythiodioxopiperazines (ETPs) from the verticillin family that act as mycotoxins. 11'-deoxyverticillin A is required for normal conidiation. The nonribosomal peptide synthetase verP is speculated to be responsible for condensation of amino acids to form the carbon skeleton of verticillin, whereas the cluster-specific tailoring enzymes are involved in further modifications leading to the production of 11'-deoxyverticillin A. The polypeptide is Dipeptidase verJ (Clonostachys rogersoniana).